The chain runs to 181 residues: Mytilin-1 (181 aa).

A signal peptide spans 1–22 (MISKYCLFVIVLGTTGTALVLT).

Component of the organic matrix of calcified shell layers like nacre and prisms.

It is found in the secreted. The chain is Mytilin-1 from Mytilus galloprovincialis (Mediterranean mussel).